The chain runs to 253 residues: Small ribosomal subunit protein uS2 (253 aa).

The protein belongs to the universal ribosomal protein uS2 family.

The polypeptide is Small ribosomal subunit protein uS2 (Chlorobium luteolum (strain DSM 273 / BCRC 81028 / 2530) (Pelodictyon luteolum)).